Here is a 449-residue protein sequence, read N- to C-terminus: Putative F-box/LRR-repeat protein 23 (449 aa).

2 LRR repeats span residues 14–37 and 39–64; these read KLWR…HLKL and GNGL…DLRR. One can recognise an F-box domain in the interval 178–225; that stretch reads LRNWAELPSKLTSSILLRLGAIEILQNAQKVCKPWHRVCKDPSMWRKI. 6 LRR repeats span residues 261-286, 287-311, 312-337, 344-367, 369-394, and 401-427; these read WYYG…GLVR, CFPI…LEVS, YCLF…KLNR, SNSG…HLQL, GNGL…DLRQ, and VGDL…DSDD.

The chain is Putative F-box/LRR-repeat protein 23 (FBL23) from Arabidopsis thaliana (Mouse-ear cress).